Here is a 426-residue protein sequence, read N- to C-terminus: Serine--tRNA ligase (426 aa).

231–233 serves as a coordination point for L-serine; that stretch reads TAE. ATP contacts are provided by residues 262-264 and Val-278; that span reads RRE. Glu-285 provides a ligand contact to L-serine. 349–352 is a binding site for ATP; that stretch reads EVSS. Residue Ser-384 participates in L-serine binding.

It belongs to the class-II aminoacyl-tRNA synthetase family. Type-1 seryl-tRNA synthetase subfamily. Homodimer. The tRNA molecule binds across the dimer.

The protein resides in the cytoplasm. It catalyses the reaction tRNA(Ser) + L-serine + ATP = L-seryl-tRNA(Ser) + AMP + diphosphate + H(+). The enzyme catalyses tRNA(Sec) + L-serine + ATP = L-seryl-tRNA(Sec) + AMP + diphosphate + H(+). It functions in the pathway aminoacyl-tRNA biosynthesis; selenocysteinyl-tRNA(Sec) biosynthesis; L-seryl-tRNA(Sec) from L-serine and tRNA(Sec): step 1/1. In terms of biological role, catalyzes the attachment of serine to tRNA(Ser). Is also able to aminoacylate tRNA(Sec) with serine, to form the misacylated tRNA L-seryl-tRNA(Sec), which will be further converted into selenocysteinyl-tRNA(Sec). The polypeptide is Serine--tRNA ligase (Chlamydia caviae (strain ATCC VR-813 / DSM 19441 / 03DC25 / GPIC) (Chlamydophila caviae)).